The chain runs to 178 residues: Female-specific protein transformer (178 aa).

Basic and acidic residues-rich tracts occupy residues 1–18 (MKMD…DSHG) and 25–40 (RERE…DSKK). The segment at 1 to 117 (MKMDADSSCG…RRYNPPPKII (117 aa)) is disordered. Basic residues-rich tracts occupy residues 59–73 (RRLR…RRSA) and 81–108 (RRHR…RSPR).

Its subcellular location is the nucleus speckle. Functionally, member of the regulatory pathway controlling female somatic sexual differentiation, regulated by Sxl. Activates dsx female-specific splicing by promoting the formation of a splicing enhancer complex which consists of tra, tra2 and sr proteins. The polypeptide is Female-specific protein transformer (tra) (Drosophila erecta (Fruit fly)).